A 464-amino-acid chain; its full sequence is ERO1-like protein alpha (464 aa).

An N-terminal signal peptide occupies residues 1–23 (MGRAWGLLVGLLGVVWLLRLGHG). Cystine bridges form between Cys35–Cys48, Cys37–Cys46, Cys85–Cys387, Cys94–Cys99, Cys94–Cys130, Cys99–Cys104, Cys207–Cys237, and Cys390–Cys393. Ser106, Ser142, and Ser144 each carry phosphoserine. FAD is bound by residues Arg186, Thr188, and Trp199. FAD-binding residues include Ser248 and His251. The N-linked (GlcNAc...) asparagine glycan is linked to Asn276. Residues Arg283 and Arg296 each coordinate FAD. The N-linked (GlcNAc...) asparagine glycan is linked to Asn380.

Belongs to the EROs family. As to quaternary structure, predominantly monomer. May function both as a monomer and a homodimer. Interacts with PDILT. Interacts with ERP44; the interaction results in retention of ERO1A in the endoplasmic reticulum. It depends on FAD as a cofactor. In terms of processing, N-glycosylated. The Cys-94/Cys-99 and Cys-390/Cys-393 disulfide bonds constitute the redox-active center. The Cys-94/Cys-99 disulfide bond may accept electron from P4HB and funnel them to the active site disulfide Cys-390/Cys-393. The regulatory Cys-99/Cys-104 disulfide bond stabilizes the other regulatory bond Cys-94/Cys-130. Post-translationally, phosphorylated on Ser-144 by FAM20C in the Golgi which increases its enzymatic activity. Phosphorylation is induced by lactation. It is also induced by hypoxia and reductive stress. Widely expressed (at protein level). In the mammary gland, expressed at higher levels in lactating mice than in virgin mice (at protein level).

Its subcellular location is the endoplasmic reticulum membrane. The protein localises to the golgi apparatus lumen. It is found in the secreted. It localises to the cell projection. The protein resides in the dendrite. Enzyme activity is tightly regulated to prevent the accumulation of reactive oxygen species in the endoplasmic reticulum. Reversibly down-regulated by the formation of disulfide bonds between the active site Cys-94 and Cys-130, and between Cys-99 and Cys-104. Glutathione may be required to regulate its activity in the endoplasmic reticulum. Oxidoreductase involved in disulfide bond formation in the endoplasmic reticulum. Efficiently reoxidizes P4HB/PDI, the enzyme catalyzing protein disulfide formation, in order to allow P4HB to sustain additional rounds of disulfide formation. Following P4HB reoxidation, passes its electrons to molecular oxygen via FAD, leading to the production of reactive oxygen species (ROS) in the cell. Required for the proper folding of immunoglobulins. Plays an important role in ER stress-induced, CHOP-dependent apoptosis by activating the inositol 1,4,5-trisphosphate receptor IP3R1. The sequence is that of ERO1-like protein alpha from Mus musculus (Mouse).